Reading from the N-terminus, the 368-residue chain is Phosphoserine aminotransferase (368 aa).

Arg44 is a binding site for L-glutamate. Pyridoxal 5'-phosphate-binding positions include 78–79, Trp104, Thr157, Asp179, and Gln202; that span reads AT. Lys203 carries the post-translational modification N6-(pyridoxal phosphate)lysine. Pyridoxal 5'-phosphate is bound at residue 244–245; sequence NT.

Belongs to the class-V pyridoxal-phosphate-dependent aminotransferase family. SerC subfamily. In terms of assembly, homodimer. The cofactor is pyridoxal 5'-phosphate.

The protein resides in the cytoplasm. The catalysed reaction is O-phospho-L-serine + 2-oxoglutarate = 3-phosphooxypyruvate + L-glutamate. It carries out the reaction 4-(phosphooxy)-L-threonine + 2-oxoglutarate = (R)-3-hydroxy-2-oxo-4-phosphooxybutanoate + L-glutamate. It participates in amino-acid biosynthesis; L-serine biosynthesis; L-serine from 3-phospho-D-glycerate: step 2/3. It functions in the pathway cofactor biosynthesis; pyridoxine 5'-phosphate biosynthesis; pyridoxine 5'-phosphate from D-erythrose 4-phosphate: step 3/5. Catalyzes the reversible conversion of 3-phosphohydroxypyruvate to phosphoserine and of 3-hydroxy-2-oxo-4-phosphonooxybutanoate to phosphohydroxythreonine. The sequence is that of Phosphoserine aminotransferase from Neisseria meningitidis serogroup C / serotype 2a (strain ATCC 700532 / DSM 15464 / FAM18).